An 833-amino-acid chain; its full sequence is ERAD-associated E3 ubiquitin-protein ligase component HRD3 (833 aa).

The N-terminal stretch at 1–20 (MITLLLYLCVICNAIVLIRA) is a signal peptide. N-linked (GlcNAc...) asparagine glycosylation is found at Asn101, Asn123, and Asn142. The Sel1-like 1 repeat unit spans residues 103–139 (SEATYTLSQIHLWSQYNFPHNMTLAHKYLEKFNDLTH). 6 Sel1-like repeats span residues 143–186 (HSAI…QLGN), 187–222 (LKAK…EQLR), 413–445 (GRAC…KTQA), 552–595 (ETAQ…KQGN), 596–627 (IDAG…LKYS), and 628–663 (IQAI…EHDH). Residue Asn429 is glycosylated (N-linked (GlcNAc...) asparagine). Residue Asn611 is glycosylated (N-linked (GlcNAc...) asparagine). Residues 768 to 788 (LVTMGCILGIFLLSILMSTLA) traverse the membrane as a helical segment. The disordered stretch occupies residues 805–824 (NGNRQQEQQQQQQAQGPPGW). A compositionally biased stretch (low complexity) spans 809–819 (QQEQQQQQQAQ).

This sequence belongs to the sel-1 family. Component of the HRD1 ubiquitin ligase complex which contains the E3 ligase HRD1, its cofactors HRD3, USA1 and DER1, substrate recruiting factor YOS9 and CDC48-binding protein UBX2. Within the complex, interacts directly with HRD1 and YOS9 (via N-terminus). In ERAD-L, HRD3 and YOS9 jointly bind misfolded glycoproteins in the endoplasmic reticulum (ER) lumen. Movement of ERAD-L substrates through the ER membrane is facilitated by HRD1 and DER1 which have lateral gates facing each other and which distort the membrane region between the lateral gates, making it much thinner than a normal phospholipid bilayer. Substrates insert into the membrane as a hairpin loop with one strand interacting with DER1 and the other with HRD1. The HRD1 complex interacts with the heterotrimeric CDC48-NPL4-UFD1 ATPase complex which is recruited by UBX2 via its interaction with CDC48 and which moves ubiquitinated substrates to the cytosol for targeting to the proteasome. The HRD1 complex interacts with the ERAD substrates HMG1 and HMG2. Interacts with KAR2.

The protein localises to the endoplasmic reticulum membrane. In terms of biological role, component of the endoplasmic reticulum quality control (ERQC) system involved in ubiquitin-dependent degradation of misfolded endoplasmic reticulum proteins. Component of the HRD1 ubiquitin ligase complex, which is part of the ERAD-L and ERAD-M pathways responsible for the rapid degradation of soluble lumenal and membrane proteins with misfolded lumenal domains (ERAD-L), or ER-membrane proteins with misfolded transmembrane domains (ERAD-M). ERAD-L substrates are ubiquitinated through HRD1 in conjunction with the E2 ubiquitin-conjugating enzymes UBC1 and UBC7-CUE1. Ubiquitinated substrates are then removed to the cytosol via the action of the CDC48-NPL4-UFD1 ATPase complex and targeted to the proteasome. ERAD-M substrates are processed by the same HRD1-HRD3 core complex, but only a subset of the other components is required for ERAD-M. Stabilizes the HRD1 ubiquitin-protein ligase. Also functions in recruiting misfolded protein substrates in conjunction with YOS9. The sequence is that of ERAD-associated E3 ubiquitin-protein ligase component HRD3 (HRD3) from Saccharomyces cerevisiae (strain ATCC 204508 / S288c) (Baker's yeast).